We begin with the raw amino-acid sequence, 73 residues long: Putative defensin-like protein 270 (73 aa).

The first 23 residues, 1–23 (MMSSKSHFVALLLIIFLIVNVQS), serve as a signal peptide directing secretion. 4 cysteine pairs are disulfide-bonded: Cys33–Cys72, Cys39–Cys60, Cys45–Cys70, and Cys49–Cys71.

The protein belongs to the DEFL family.

It is found in the secreted. This Arabidopsis thaliana (Mouse-ear cress) protein is Putative defensin-like protein 270.